We begin with the raw amino-acid sequence, 132 residues long: Hemoglobin subunit beta-1 (132 aa).

In terms of domain architecture, Globin spans 1 to 132 (WSKIDIDVCG…VVSALGRQYH (132 aa)). Heme b is bound by residues His-49 and His-78.

This sequence belongs to the globin family. In terms of assembly, hb 1 is a heterotetramer of two alpha-1 and two beta-1 chains. Hb 2 is a heterotetramer of two alpha-2 and two beta-1 chains. Red blood cells.

Its function is as follows. Involved in oxygen transport from gills to the various peripheral tissues. The sequence is that of Hemoglobin subunit beta-1 (hbb1) from Arctogadus glacialis (Arctic cod).